Here is a 262-residue protein sequence, read N- to C-terminus: 4-hydroxy-2-oxo-heptane-1,7-dioate aldolase (262 aa).

The active-site Proton acceptor is the His45. Substrate is bound at residue Gln147. Glu149 contacts a divalent metal cation. The substrate site is built by Ala174 and Asp175. Position 175 (Asp175) interacts with a divalent metal cation.

This sequence belongs to the HpcH/HpaI aldolase family. In terms of assembly, homohexamer; trimer of dimers. It depends on a divalent metal cation as a cofactor.

It catalyses the reaction 4-hydroxy-2-oxoheptanedioate = succinate semialdehyde + pyruvate. Its pathway is aromatic compound metabolism; 4-hydroxyphenylacetate degradation; pyruvate and succinate semialdehyde from 4-hydroxyphenylacetate: step 7/7. Catalyzes the reversible retro-aldol cleavage of 4-hydroxy-2-ketoheptane-1,7-dioate (HKHD) to pyruvate and succinic semialdehyde. The protein is 4-hydroxy-2-oxo-heptane-1,7-dioate aldolase of Shigella sonnei (strain Ss046).